The primary structure comprises 388 residues: Chaperone protein DnaJ (388 aa).

Residues 5 to 70 form the J domain; sequence DYYTTLNISN…KKRNLYDQYG (66 aa). The CR-type zinc-finger motif lies at 135–213; the sequence is GIKKEIRIPK…CFGQGRIKKS (79 aa). The Zn(2+) site is built by C148, C151, C165, C168, C187, C190, C201, and C204. CXXCXGXG motif repeat units lie at residues 148-155, 165-172, 187-194, and 201-208; these read CQSCYGYG, CTSCNGHG, CSTCRGTG, and CKICFGQG.

Belongs to the DnaJ family. Homodimer. Requires Zn(2+) as cofactor.

It localises to the cytoplasm. Its function is as follows. Participates actively in the response to hyperosmotic and heat shock by preventing the aggregation of stress-denatured proteins and by disaggregating proteins, also in an autonomous, DnaK-independent fashion. Unfolded proteins bind initially to DnaJ; upon interaction with the DnaJ-bound protein, DnaK hydrolyzes its bound ATP, resulting in the formation of a stable complex. GrpE releases ADP from DnaK; ATP binding to DnaK triggers the release of the substrate protein, thus completing the reaction cycle. Several rounds of ATP-dependent interactions between DnaJ, DnaK and GrpE are required for fully efficient folding. Also involved, together with DnaK and GrpE, in the DNA replication of plasmids through activation of initiation proteins. The polypeptide is Chaperone protein DnaJ (Buchnera aphidicola subsp. Cinara cedri (strain Cc)).